A 299-amino-acid chain; its full sequence is Taste receptor type 2 member 4 (299 aa).

Residues 1–9 are Extracellular-facing; sequence MLRLFYFSA. Residues 10–30 traverse the membrane as a helical segment; sequence IIASVILNFVGIIMNLFITVV. At 31–46 the chain is on the cytoplasmic side; the sequence is NCKTWVKSHRISSSDR. The chain crosses the membrane as a helical span at residues 47–67; the sequence is ILFSLGITRFLMLGLFLVNTI. Residues 68-81 lie on the Extracellular side of the membrane; that stretch reads YFVSSNXERSVYLS. A helical transmembrane segment spans residues 82 to 102; sequence AFFVLCFMFLDSSSLWFVTLL. Residues 103–131 lie on the Cytoplasmic side of the membrane; that stretch reads NILYCVKITNFQHSVFLLLKRNISPKIPR. A helical transmembrane segment spans residues 132–152; the sequence is LLLACVLISAFTTCLYITLSQ. Residues 153 to 172 are Extracellular-facing; the sequence is ASPFPELVTTRNNTSFNINE. N-linked (GlcNAc...) asparagine glycosylation is found at asparagine 164 and asparagine 165. Residues 173 to 193 traverse the membrane as a helical segment; it reads GILSLVVSLVLSSSLQFIINV. Topologically, residues 194 to 230 are cytoplasmic; sequence TSASLLIHSLRRHIQKMQKNATGFWNPQTEAHVGAMK. The helical transmembrane segment at 231–251 threads the bilayer; the sequence is LMVYFLILYIPYSVATLVQYL. Over 252–262 the chain is Extracellular; sequence PFYAGMDMGTK. The chain crosses the membrane as a helical span at residues 263–283; the sequence is SICLIFATLYSPGHSVLIIIT. Topologically, residues 284-299 are cytoplasmic; that stretch reads HPKLKTTAKKILCFKK.

This sequence belongs to the G-protein coupled receptor T2R family.

It localises to the membrane. The protein localises to the cell projection. Its subcellular location is the cilium membrane. In terms of biological role, gustducin-coupled receptor implicated in the perception of bitter compounds in the oral cavity and the gastrointestinal tract. Signals through PLCB2 and the calcium-regulated cation channel TRPM5. In airway epithelial cells, binding of denatonium increases the intracellular calcium ion concentration and stimulates ciliary beat frequency. This Pan troglodytes (Chimpanzee) protein is Taste receptor type 2 member 4 (TAS2R4).